Here is a 688-residue protein sequence, read N- to C-terminus: DNA ligase (688 aa).

Residues 38-42 (DEEYD), 87-88 (SL), and Glu-118 each bind NAD(+). Catalysis depends on Lys-120, which acts as the N6-AMP-lysine intermediate. Positions 141, 175, 291, and 315 each coordinate NAD(+). Zn(2+) contacts are provided by Cys-409, Cys-412, Cys-428, and Cys-433. In terms of domain architecture, BRCT spans 590-679 (MKLDILKGLT…AELKGYNFDE (90 aa)).

It belongs to the NAD-dependent DNA ligase family. LigA subfamily. Mg(2+) serves as cofactor. Requires Mn(2+) as cofactor.

It carries out the reaction NAD(+) + (deoxyribonucleotide)n-3'-hydroxyl + 5'-phospho-(deoxyribonucleotide)m = (deoxyribonucleotide)n+m + AMP + beta-nicotinamide D-nucleotide.. DNA ligase that catalyzes the formation of phosphodiester linkages between 5'-phosphoryl and 3'-hydroxyl groups in double-stranded DNA using NAD as a coenzyme and as the energy source for the reaction. It is essential for DNA replication and repair of damaged DNA. The polypeptide is DNA ligase (Thermotoga petrophila (strain ATCC BAA-488 / DSM 13995 / JCM 10881 / RKU-1)).